Consider the following 381-residue polypeptide: tRNA-specific 2-thiouridylase MnmA (381 aa).

Residues 9 to 16 (GMSGGVDS) and methionine 35 contribute to the ATP site. The segment at 95–97 (NPD) is interaction with target base in tRNA. The active-site Nucleophile is cysteine 100. Cysteine 100 and cysteine 196 are joined by a disulfide. Glycine 124 contributes to the ATP binding site. Residues 146–148 (KDQ) form an interaction with tRNA region. Residue cysteine 196 is the Cysteine persulfide intermediate of the active site. Residues 308-309 (RY) form an interaction with tRNA region.

It belongs to the MnmA/TRMU family.

Its subcellular location is the cytoplasm. The enzyme catalyses S-sulfanyl-L-cysteinyl-[protein] + uridine(34) in tRNA + AH2 + ATP = 2-thiouridine(34) in tRNA + L-cysteinyl-[protein] + A + AMP + diphosphate + H(+). Its function is as follows. Catalyzes the 2-thiolation of uridine at the wobble position (U34) of tRNA, leading to the formation of s(2)U34. The sequence is that of tRNA-specific 2-thiouridylase MnmA from Burkholderia multivorans (strain ATCC 17616 / 249).